We begin with the raw amino-acid sequence, 157 residues long: Protein Smg (157 aa).

This sequence belongs to the Smg family.

This is Protein Smg from Escherichia coli O139:H28 (strain E24377A / ETEC).